Reading from the N-terminus, the 122-residue chain is C-C motif chemokine 9 (122 aa).

The signal sequence occupies residues 1–21 (MKPFHTALSFLILTTALGIWA). Intrachain disulfides connect C57–C80, C58–C96, and C67–C107.

This sequence belongs to the intercrine beta (chemokine CC) family. In terms of processing, the N-terminal is proteolytically cleaved by proteases associated with inflammatory responses. The processed forms CCL9(29-101), CCL9(30-101) and CCL9(31-101) exhibit increase in CCR1-mediated signaling and chemotaxis assays in vitro. As to expression, expressed mainly in the liver, lung, and the thymus, although some expression has been detected in a wide variety of tissues except brain.

It is found in the secreted. Monokine with inflammatory, pyrogenic and chemokinetic properties. Circulates at high concentrations in the blood of healthy animals. Binding to a high-affinity receptor activates calcium release in neutrophils. It also inhibits colony formation of bone marrow myeloid immature progenitors. This Mus musculus (Mouse) protein is C-C motif chemokine 9 (Ccl9).